The primary structure comprises 538 residues: Spindle pole body protein CSA6 (538 aa).

Disordered stretches follow at residues 1 to 31 (MEDS…TSDL) and 57 to 129 (QNIS…KYQD). Composition is skewed to basic and acidic residues over residues 18–30 (PEIK…KTSD) and 57–68 (QNISDSEHDLTP). Composition is skewed to polar residues over residues 86 to 96 (KFSSSIPQKPT) and 104 to 122 (TSPT…SGPN). The stretch at 144 to 237 (KQEQNLKLEN…RNERDELVKD (94 aa)) forms a coiled coil. Positions 304–323 (KKISEPSAAVEKDTTSEDKT) are enriched in basic and acidic residues. 2 disordered regions span residues 304 to 338 (KKIS…TPRM) and 355 to 458 (SSNN…STKY). Polar residues-rich tracts occupy residues 355–392 (SSNN…SAAY) and 407–425 (TNFY…QSSQ). The segment covering 426–444 (SDERPETFELPHVAKDHWL) has biased composition (basic and acidic residues). Positions 446 to 457 (RPTSERSTQSTK) are enriched in polar residues.

It is found in the cytoplasm. The protein resides in the cytoskeleton. The protein localises to the microtubule organizing center. Its subcellular location is the spindle pole body. Its function is as follows. Plays a role in mitotic spindle pole body organization, possibly at the point of spindle pole body separation. Required for mitotic exit. The sequence is that of Spindle pole body protein CSA6 from Candida albicans (strain SC5314 / ATCC MYA-2876) (Yeast).